Consider the following 469-residue polypeptide: Glutamate--tRNA ligase 1 (469 aa).

The short motif at 9-19 is the 'HIGH' region element; sequence PSPTGYLHVGG. 4 residues coordinate Zn(2+): cysteine 98, cysteine 100, cysteine 125, and glutamate 127. The short motif at 236 to 240 is the 'KMSKS' region element; it reads RLSKR. Lysine 239 is a binding site for ATP.

This sequence belongs to the class-I aminoacyl-tRNA synthetase family. Glutamate--tRNA ligase type 1 subfamily. Monomer. Zn(2+) is required as a cofactor.

Its subcellular location is the cytoplasm. The catalysed reaction is tRNA(Glu) + L-glutamate + ATP = L-glutamyl-tRNA(Glu) + AMP + diphosphate. Its function is as follows. Catalyzes the attachment of glutamate to tRNA(Glu) in a two-step reaction: glutamate is first activated by ATP to form Glu-AMP and then transferred to the acceptor end of tRNA(Glu). This chain is Glutamate--tRNA ligase 1, found in Nitrosococcus oceani (strain ATCC 19707 / BCRC 17464 / JCM 30415 / NCIMB 11848 / C-107).